Reading from the N-terminus, the 506-residue chain is MIMINSPSYLEFCNISKHFPGVKALSNISFRANKGSIHALMGENGAGKSTLLKTLSGLHQPTEGELVVDGKALVFNSATDALEQGIAIIYQELNLVPELSVAENIYLGQLPTKGGSVDVETLNARAREQLKRLGEDFDPSRPLKEFSIGQWQMVEIAKALSRNAQIIAFDEPTSSLSQREIQNLFKVIRELRDDGKIILYVSHRMEEIFDLCDAITIFKDGTHVQTFDDMTDLTHEKLVELMVGREINDIYNYRSRSLGESGLRIENLEGKGLTQPVSLDIRQGEILGLFGLVGAGRTELTRLIFGAEKAQAGQIYIHGQPISVRSPQDAIRAGITLCPEDRKADAIVPILSVEENTNISARPWNLKLGGLIDFKWERDNAEQQRKALNVKTASLQQAIGQLSGGNQQKVILGRWLSTDMSVILLDEPTRGIDVGAKSEIYELIFNLAERGVTVLVVSSDLPEVLGISDRVMVMKEGAVTGELQRHEFKEQTALSLAMLGNNQAAA.

ABC transporter domains follow at residues 10 to 245 and 253 to 501; these read LEFC…MVGR and YRSR…MLGN. 42–49 provides a ligand contact to ATP; that stretch reads GENGAGKS.

This sequence belongs to the ABC transporter superfamily. Arabinose importer (TC 3.A.1.2.2) family. As to quaternary structure, the complex is composed of two ATP-binding proteins (AraG), two transmembrane proteins (AraH) and a solute-binding protein (AraF).

The protein localises to the cell inner membrane. It carries out the reaction L-arabinose(out) + ATP + H2O = L-arabinose(in) + ADP + phosphate + H(+). Part of the ABC transporter complex AraFGH involved in arabinose import. Responsible for energy coupling to the transport system. The polypeptide is Arabinose import ATP-binding protein AraG (Vibrio parahaemolyticus serotype O3:K6 (strain RIMD 2210633)).